The primary structure comprises 306 residues: Pyridoxal 5'-phosphate synthase subunit PdxS (306 aa).

Position 36 (Asp36) interacts with D-ribose 5-phosphate. The active-site Schiff-base intermediate with D-ribose 5-phosphate is the Lys93. Gly165 lines the D-ribose 5-phosphate pocket. A D-glyceraldehyde 3-phosphate-binding site is contributed by Arg177. Residues Gly226 and 247-248 (GS) each bind D-ribose 5-phosphate.

This sequence belongs to the PdxS/SNZ family. In terms of assembly, in the presence of PdxT, forms a dodecamer of heterodimers.

The catalysed reaction is aldehydo-D-ribose 5-phosphate + D-glyceraldehyde 3-phosphate + L-glutamine = pyridoxal 5'-phosphate + L-glutamate + phosphate + 3 H2O + H(+). It participates in cofactor biosynthesis; pyridoxal 5'-phosphate biosynthesis. In terms of biological role, catalyzes the formation of pyridoxal 5'-phosphate from ribose 5-phosphate (RBP), glyceraldehyde 3-phosphate (G3P) and ammonia. The ammonia is provided by the PdxT subunit. Can also use ribulose 5-phosphate and dihydroxyacetone phosphate as substrates, resulting from enzyme-catalyzed isomerization of RBP and G3P, respectively. The chain is Pyridoxal 5'-phosphate synthase subunit PdxS from Corynebacterium urealyticum (strain ATCC 43042 / DSM 7109).